The following is a 122-amino-acid chain: Large ribosomal subunit protein uL14 (122 aa).

Belongs to the universal ribosomal protein uL14 family. In terms of assembly, part of the 50S ribosomal subunit. Forms a cluster with proteins L3 and L19. In the 70S ribosome, L14 and L19 interact and together make contacts with the 16S rRNA in bridges B5 and B8.

Functionally, binds to 23S rRNA. Forms part of two intersubunit bridges in the 70S ribosome. The chain is Large ribosomal subunit protein uL14 from Alkaliphilus metalliredigens (strain QYMF).